A 353-amino-acid chain; its full sequence is Protein RecA (353 aa).

Gly-67 to Thr-74 is an ATP binding site.

The protein belongs to the RecA family.

The protein localises to the cytoplasm. Functionally, can catalyze the hydrolysis of ATP in the presence of single-stranded DNA, the ATP-dependent uptake of single-stranded DNA by duplex DNA, and the ATP-dependent hybridization of homologous single-stranded DNAs. It interacts with LexA causing its activation and leading to its autocatalytic cleavage. This Salmonella agona (strain SL483) protein is Protein RecA.